Consider the following 40-residue polypeptide: Photosystem II reaction center protein J (40 aa).

A helical transmembrane segment spans residues 8–28 (IPLWLIGTVTGILVIGLLGIF).

It belongs to the PsbJ family. In terms of assembly, PSII is composed of 1 copy each of membrane proteins PsbA, PsbB, PsbC, PsbD, PsbE, PsbF, PsbH, PsbI, PsbJ, PsbK, PsbL, PsbM, PsbT, PsbX, PsbY, PsbZ, Psb30/Ycf12, at least 3 peripheral proteins of the oxygen-evolving complex and a large number of cofactors. It forms dimeric complexes.

Its subcellular location is the plastid. The protein localises to the chloroplast thylakoid membrane. Functionally, one of the components of the core complex of photosystem II (PSII). PSII is a light-driven water:plastoquinone oxidoreductase that uses light energy to abstract electrons from H(2)O, generating O(2) and a proton gradient subsequently used for ATP formation. It consists of a core antenna complex that captures photons, and an electron transfer chain that converts photonic excitation into a charge separation. This chain is Photosystem II reaction center protein J, found in Angiopteris evecta (Mule's foot fern).